A 241-amino-acid polypeptide reads, in one-letter code: Small ribosomal subunit protein uS2 (241 aa).

Belongs to the universal ribosomal protein uS2 family.

The sequence is that of Small ribosomal subunit protein uS2 from Cronobacter sakazakii (strain ATCC BAA-894) (Enterobacter sakazakii).